The primary structure comprises 218 residues: ATP phosphoribosyltransferase (218 aa).

The protein belongs to the ATP phosphoribosyltransferase family. Short subfamily. In terms of assembly, heteromultimer composed of HisG and HisZ subunits.

The protein localises to the cytoplasm. The catalysed reaction is 1-(5-phospho-beta-D-ribosyl)-ATP + diphosphate = 5-phospho-alpha-D-ribose 1-diphosphate + ATP. It participates in amino-acid biosynthesis; L-histidine biosynthesis; L-histidine from 5-phospho-alpha-D-ribose 1-diphosphate: step 1/9. Catalyzes the condensation of ATP and 5-phosphoribose 1-diphosphate to form N'-(5'-phosphoribosyl)-ATP (PR-ATP). Has a crucial role in the pathway because the rate of histidine biosynthesis seems to be controlled primarily by regulation of HisG enzymatic activity. In Burkholderia mallei (strain ATCC 23344), this protein is ATP phosphoribosyltransferase.